The primary structure comprises 185 residues: Probable nicotinate-nucleotide adenylyltransferase (185 aa).

Belongs to the NadD family.

The enzyme catalyses nicotinate beta-D-ribonucleotide + ATP + H(+) = deamido-NAD(+) + diphosphate. It functions in the pathway cofactor biosynthesis; NAD(+) biosynthesis; deamido-NAD(+) from nicotinate D-ribonucleotide: step 1/1. In terms of biological role, catalyzes the reversible adenylation of nicotinate mononucleotide (NaMN) to nicotinic acid adenine dinucleotide (NaAD). This chain is Probable nicotinate-nucleotide adenylyltransferase, found in Cereibacter sphaeroides (strain ATCC 17025 / ATH 2.4.3) (Rhodobacter sphaeroides).